We begin with the raw amino-acid sequence, 156 residues long: Phosphopantetheine adenylyltransferase (156 aa).

Threonine 9 serves as a coordination point for substrate. Residues 9-10 (TF) and histidine 17 contribute to the ATP site. Lysine 41, leucine 73, and arginine 87 together coordinate substrate. ATP contacts are provided by residues 88–90 (GVR), glutamate 98, and 123–129 (WVFVSST).

Belongs to the bacterial CoaD family. Homohexamer. Mg(2+) serves as cofactor.

The protein resides in the cytoplasm. The enzyme catalyses (R)-4'-phosphopantetheine + ATP + H(+) = 3'-dephospho-CoA + diphosphate. The protein operates within cofactor biosynthesis; coenzyme A biosynthesis; CoA from (R)-pantothenate: step 4/5. Its function is as follows. Reversibly transfers an adenylyl group from ATP to 4'-phosphopantetheine, yielding dephospho-CoA (dPCoA) and pyrophosphate. The chain is Phosphopantetheine adenylyltransferase from Haemophilus influenzae (strain PittEE).